The following is a 225-amino-acid chain: Ras-related protein Rab-32 (225 aa).

Ala-2 carries the N-acetylalanine modification. GTP-binding residues include Val-36, Gly-37, Lys-38, Thr-39, Ser-40, Ser-51, Gln-52, Tyr-54, and Thr-57. A Mg(2+)-binding site is contributed by Thr-39. A Switch 1 motif is present at residues 48 to 62 (QLFSQHYRATIGVDF). Residue Thr-57 coordinates Mg(2+). A Phosphoserine modification is found at Ser-71. Mg(2+) is bound at residue Asp-81. GTP-binding residues include Gly-84, Asn-143, Lys-144, Asp-146, Ala-175, and Lys-176. The Switch 2 motif lies at 84-97 (GQERFGNMTRVYYK). A PKA-RII subunit binding domain region spans residues 178–197 (NINIEEAARFLVEKILVNHQ). Residues Cys-224 and Cys-225 are each lipidated (S-geranylgeranyl cysteine).

It belongs to the small GTPase superfamily. Rab family. In terms of assembly, interacts with ANKRD27. A decreased interaction with ANKRD27 seen in the presence of SGSM2. Interacts with LRRK2 (via N-terminus); this interaction results in stimulation of RAB10 phosphorylation by LRRK2. Mg(2+) serves as cofactor. As to expression, widely expressed with high levels in heart, liver, kidney, bone marrow, testis, colon and fetal lung.

The protein localises to the mitochondrion. Its subcellular location is the mitochondrion outer membrane. The protein resides in the cytoplasmic vesicle. It is found in the phagosome. It localises to the phagosome membrane. The protein localises to the melanosome. Its subcellular location is the melanosome membrane. The catalysed reaction is GTP + H2O = GDP + phosphate + H(+). Regulated by guanine the nucleotide exchange factor (GEF) BLOC-3 complex composed of HPS1 and HPS4 which promote the exchange of bound GDP for free GTP. Regulated by the GTPase activating protein (GAP) SGSM2/RUTBC1 which increases the GTP hydrolysis activity. Inhibited by GDP dissociation inhibitors (GDIs) which prevent Rab-GDP dissociation. The small GTPases Rab are key regulators of intracellular membrane trafficking, from the formation of transport vesicles to their fusion with membranes. Rabs cycle between an inactive GDP-bound form and an active GTP-bound form that is able to recruit to membranes different set of downstream effectors directly responsible for vesicle formation, movement, tethering and fusion. Also acts as an A-kinase anchoring protein by binding to the type II regulatory subunit of protein kinase A and anchoring it to the mitochondrion. Also involved in synchronization of mitochondrial fission. Plays a role in the maturation of phagosomes that engulf pathogens, such as S.aureus and M.tuberculosis. Plays an important role in the control of melanin production and melanosome biogenesis. In concert with RAB38, regulates the proper trafficking of melanogenic enzymes TYR, TYRP1 and DCT/TYRP2 to melanosomes in melanocytes. Stimulates phosphorylation of RAB10 'Thr-73' by LRRK2. The protein is Ras-related protein Rab-32 of Homo sapiens (Human).